A 109-amino-acid polypeptide reads, in one-letter code: Spermidine export protein MdtI (109 aa).

A run of 4 helical transmembrane segments spans residues 6–26 (WIHA…NVFL), 36–56 (IYGI…SQAV), 64–84 (AYAL…WVLF), and 88–108 (LNNK…LIKL).

Belongs to the drug/metabolite transporter (DMT) superfamily. Small multidrug resistance (SMR) (TC 2.A.7.1) family. MdtI subfamily. In terms of assembly, forms a complex with MdtJ.

Its subcellular location is the cell inner membrane. Catalyzes the excretion of spermidine. This Klebsiella pneumoniae subsp. pneumoniae (strain ATCC 700721 / MGH 78578) protein is Spermidine export protein MdtI.